The primary structure comprises 95 residues: MSVNDKTIKRIAHLARIAIHDNETERITKKFNAILDFAKQLDEIDVTGVDPLISVIPMTLRTREDSITDGNKAADIVANAPVTEENFFLVSKIVE.

This sequence belongs to the GatC family. In terms of assembly, heterotrimer of A, B and C subunits.

The catalysed reaction is L-glutamyl-tRNA(Gln) + L-glutamine + ATP + H2O = L-glutaminyl-tRNA(Gln) + L-glutamate + ADP + phosphate + H(+). The enzyme catalyses L-aspartyl-tRNA(Asn) + L-glutamine + ATP + H2O = L-asparaginyl-tRNA(Asn) + L-glutamate + ADP + phosphate + 2 H(+). In terms of biological role, allows the formation of correctly charged Asn-tRNA(Asn) or Gln-tRNA(Gln) through the transamidation of misacylated Asp-tRNA(Asn) or Glu-tRNA(Gln) in organisms which lack either or both of asparaginyl-tRNA or glutaminyl-tRNA synthetases. The reaction takes place in the presence of glutamine and ATP through an activated phospho-Asp-tRNA(Asn) or phospho-Glu-tRNA(Gln). The chain is Aspartyl/glutamyl-tRNA(Asn/Gln) amidotransferase subunit C from Bartonella bacilliformis (strain ATCC 35685 / KC583 / Herrer 020/F12,63).